We begin with the raw amino-acid sequence, 579 residues long: Glutamine--tRNA ligase (579 aa).

Positions Pro41 to His51 match the 'HIGH' region motif. ATP is bound by residues Glu42 to Asn44 and His48 to Ala54. L-glutamine contacts are provided by Asp74 and Tyr218. ATP is bound by residues Thr237, Arg285–Leu286, and Met293–Lys295. The short motif at Val292–Arg296 is the 'KMSKS' region element.

It belongs to the class-I aminoacyl-tRNA synthetase family. Monomer.

It is found in the cytoplasm. The enzyme catalyses tRNA(Gln) + L-glutamine + ATP = L-glutaminyl-tRNA(Gln) + AMP + diphosphate. This is Glutamine--tRNA ligase from Xanthomonas euvesicatoria pv. vesicatoria (strain 85-10) (Xanthomonas campestris pv. vesicatoria).